Consider the following 233-residue polypeptide: B-cell lymphoma/leukemia 10 (233 aa).

Met-1 carries the post-translational modification N-acetylmethionine. One can recognise a CARD domain in the interval 13–101 (LTEVKKDALE…QNFLIQKITD (89 aa)). Glycyl lysine isopeptide (Lys-Gly) (interchain with G-Cter in ubiquitin) cross-links involve residues Lys-17, Lys-31, and Lys-63. Ser-138 is modified (phosphoserine). The disordered stretch occupies residues 187–233 (FSSTTLPRPGDPGAPPLPPDLQLEEEGTCANSSEMFLPLRSRTVSRQ). The span at 195 to 205 (PGDPGAPPLPP) shows a compositional bias: pro residues.

Homomultimer; homooligomerized following recruitment by CARD domain-containing proteins that form a nucleating helical template that recruits BCL10 via CARD-CARD interaction. Self-associates by CARD-CARD interaction and interacts with other CARD-proteins such as CARD9, CARD10, CARD11 and CARD14. Forms a complex with CARD14 and MALT1; resulting in the formation of a CBM (CARD14-BCL10-MALT1) complex. Forms a complex with CARD11 and MALT1; resulting in the formation of a CBM (CARD11-BCL10-MALT1) complex. Forms a complex with CARD9 and MALT1; resulting in the formation of a CBM (CARD9-BCL10-MALT1) complex. Found in a membrane raft complex, at least composed of BCL10, CARD11, DPP4 and IKBKB. Binds caspase-9 with its C-terminal domain. Interacts with TRAF2 and BIRC2/c-IAP2. Interacts with PELI2 and SOCS3; these interactions may be mutually exclusive. Phosphorylated. Phosphorylation results in dissociation from TRAF2 and binding to BIRC2/c-IAP2. Phosphorylated by IKBKB/IKKB. In terms of processing, ubiquitinated via both 'Lys-63'-linked and linear ('Met-1'-linked) polyubiquitin chains in response to T-cell receptor (TCR) activation. Ubiquitination is recognized by IKBKG/NEMO, the regulatory subunit of I-kappa-B kinase (IKK), and is required for TCR-induced NF-kappa-B activation. Linear ubiquitination at Lys-17, Lys-31 and Lys-63 is mediated by RNF31/HOIP; linear ubiquitination is recognized with much higher affinity than 'Lys-63'-linked ubiquitin by IKBKG/NEMO. CARD11 is required for linear ubiquitination by HOIP by promoting the targeting of BCL10 to RNF31/HOIP. Post-translationally, proteolytically cleaved by MALT1; required for T-cell activation. Ubiquitous.

The protein localises to the cytoplasm. It localises to the perinuclear region. Its subcellular location is the membrane raft. Functionally, plays a key role in both adaptive and innate immune signaling by bridging CARD domain-containing proteins to immune activation. Acts by channeling adaptive and innate immune signaling downstream of CARD domain-containing proteins CARD9, CARD11 and CARD14 to activate NF-kappa-B and MAP kinase p38 (MAPK11, MAPK12, MAPK13 and/or MAPK14) pathways which stimulate expression of genes encoding pro-inflammatory cytokines and chemokines. Recruited by activated CARD domain-containing proteins: homooligomerized CARD domain-containing proteins form a nucleating helical template that recruits BCL10 via CARD-CARD interaction, thereby promoting polymerization of BCL10, subsequent recruitment of MALT1 and formation of a CBM complex. This leads to activation of NF-kappa-B and MAP kinase p38 (MAPK11, MAPK12, MAPK13 and/or MAPK14) pathways which stimulate expression of genes encoding pro-inflammatory cytokines and chemokines. Activated by CARD9 downstream of C-type lectin receptors; CARD9-mediated signals are essential for antifungal immunity. Activated by CARD11 downstream of T-cell receptor (TCR) and B-cell receptor (BCR). Promotes apoptosis, pro-caspase-9 maturation and activation of NF-kappa-B via NIK and IKK. The chain is B-cell lymphoma/leukemia 10 from Homo sapiens (Human).